The primary structure comprises 198 residues: Carnitine operon protein CaiE (198 aa).

The tract at residues 179–198 is disordered; sequence VEENRPRLKGTTDVKPKSAQ. Residues 180-198 show a composition bias toward basic and acidic residues; sequence EENRPRLKGTTDVKPKSAQ.

It belongs to the transferase hexapeptide repeat family.

It participates in amine and polyamine metabolism; carnitine metabolism. Overproduction of CaiE stimulates the activity of CaiB and CaiD. This chain is Carnitine operon protein CaiE, found in Salmonella agona (strain SL483).